A 422-amino-acid chain; its full sequence is F-box/WD repeat-containing protein 2 (422 aa).

The F-box domain maps to 54–101; sequence RDFLKLLPLELSFYLLKWLDPQTLLTCCLVSKQWNKVISACTEVWQTA. 4 WD repeats span residues 146-183, 185-221, 224-265, and 276-314; these read GHSA…CVYG, QTHT…RTQH, GHTG…NTLT, and LQKC…NCKC. At Lys298 the chain carries N6-acetyllysine.

Directly interacts with SKP1 and CUL1. As to expression, widely expressed during embryogenesis and in adult tissues.

Functionally, substrate-recognition component of the SCF (SKP1-CUL1-F-box protein)-type E3 ubiquitin ligase complex. The chain is F-box/WD repeat-containing protein 2 (Fbxw2) from Mus musculus (Mouse).